The primary structure comprises 669 residues: Probable L-type lectin-domain containing receptor kinase I.2 (669 aa).

Residues 1–24 form the signal peptide; that stretch reads MAQRFYLLLLLLIFLVNLICFSSQ. Residues 25-295 lie on the Extracellular side of the membrane; that stretch reads QDLSFVFNGF…FTEQKRKRSP (271 aa). A legume-lectin like region spans residues 26-266; sequence DLSFVFNGFN…NQYILGWSFS (241 aa). N-linked (GlcNAc...) asparagine glycans are attached at residues Asn-132, Asn-189, Asn-212, and Asn-233. The helical transmembrane segment at 296–316 threads the bilayer; the sequence is LLIVLLVILTLVVIGGLGGYY. Over 317-669 the chain is Cytoplasmic; that stretch reads LYRRKKYAEV…SHTILNGDGR (353 aa). The region spanning 351-609 is the Protein kinase domain; it reads FNKDGRLGKG…MQYINRDQAL (259 aa). ATP-binding positions include 357–365 and Lys-379; that span reads LGKGGFGEV. The Proton acceptor role is filled by Asp-475.

In the C-terminal section; belongs to the protein kinase superfamily. Ser/Thr protein kinase family. It in the N-terminal section; belongs to the leguminous lectin family.

The protein resides in the cell membrane. The enzyme catalyses L-seryl-[protein] + ATP = O-phospho-L-seryl-[protein] + ADP + H(+). It catalyses the reaction L-threonyl-[protein] + ATP = O-phospho-L-threonyl-[protein] + ADP + H(+). Involved in resistance response to the pathogenic fungus Alternaria brassicicola. The chain is Probable L-type lectin-domain containing receptor kinase I.2 from Arabidopsis thaliana (Mouse-ear cress).